Consider the following 397-residue polypeptide: Corticosteroid-binding globulin (397 aa).

The first 22 residues, 1–22 (MSLALYTCLFWLCTSGLWTTQA), serve as a signal peptide directing secretion. 4 N-linked (GlcNAc...) asparagine glycosylation sites follow: asparagine 89, asparagine 169, asparagine 217, and asparagine 232. Glutamine 247 serves as a coordination point for cortisol. N-linked (GlcNAc...) asparagine glycosylation is present at asparagine 253. Aspartate 279 provides a ligand contact to cortisol. The N-linked (GlcNAc...) asparagine glycan is linked to asparagine 320. Cortisol is bound at residue tryptophan 385.

It belongs to the serpin family. As to expression, expressed by the liver; secreted in plasma.

It localises to the secreted. Its function is as follows. Major transport protein for glucocorticoids and progestins in the blood of almost all vertebrate species. The chain is Corticosteroid-binding globulin (Serpina6) from Mus musculus (Mouse).